Consider the following 208-residue polypeptide: Translation initiation factor IF-3 (208 aa).

This sequence belongs to the IF-3 family. In terms of assembly, monomer.

It is found in the cytoplasm. Its function is as follows. IF-3 binds to the 30S ribosomal subunit and shifts the equilibrium between 70S ribosomes and their 50S and 30S subunits in favor of the free subunits, thus enhancing the availability of 30S subunits on which protein synthesis initiation begins. This is Translation initiation factor IF-3 from Parabacteroides distasonis (strain ATCC 8503 / DSM 20701 / CIP 104284 / JCM 5825 / NCTC 11152).